The chain runs to 268 residues: Undecaprenyl-diphosphatase (268 aa).

8 helical membrane-spanning segments follow: residues 4 to 24 (STTL…FIPV), 50 to 70 (IQLG…VSVI), 84 to 104 (VAVL…HGFI), 109 to 129 (FETP…LLFV), 144 to 164 (LPLN…VPGV), 185 to 205 (AEFS…FDLF), 214 to 234 (SALG…VLVV), and 247 to 267 (ALFG…LLAG).

This sequence belongs to the UppP family.

It localises to the cell inner membrane. It carries out the reaction di-trans,octa-cis-undecaprenyl diphosphate + H2O = di-trans,octa-cis-undecaprenyl phosphate + phosphate + H(+). Catalyzes the dephosphorylation of undecaprenyl diphosphate (UPP). Confers resistance to bacitracin. The protein is Undecaprenyl-diphosphatase of Cereibacter sphaeroides (strain ATCC 17029 / ATH 2.4.9) (Rhodobacter sphaeroides).